The chain runs to 481 residues: Serralysin B (481 aa).

Residues methionine 1–alanine 15 constitute a propeptide that is removed on maturation. Residue histidine 189 coordinates Zn(2+). Glutamate 190 is an active-site residue. Histidine 193 and tyrosine 230 together coordinate Zn(2+). Ca(2+)-binding residues include arginine 267, glycine 269, threonine 271, aspartate 299, glycine 301, glycine 302, aspartate 304, threonine 341, glutamate 343, glycine 348, glycine 350, aspartate 352, asparagine 357, alanine 359, asparagine 361, glycine 365, glycine 366, alanine 367, glycine 368, aspartate 370, glycine 374, glycine 377, aspartate 379, glycine 383, glycine 384, alanine 385, glycine 386, aspartate 388, aspartate 397, aspartate 404, and aspartate 414. Hemolysin-type calcium-binding repeat units follow at residues isoleucine 346 to leucine 363, glutamine 364 to leucine 381, and threonine 382 to threonine 399.

This sequence belongs to the peptidase M10B family. It depends on Ca(2+) as a cofactor. Zn(2+) is required as a cofactor.

It is found in the secreted. It carries out the reaction Preferential cleavage of bonds with hydrophobic residues in P1'.. The protein is Serralysin B (prtB) of Dickeya chrysanthemi (Pectobacterium chrysanthemi).